The sequence spans 96 residues: UPF0298 protein LCA_1075 (96 aa).

The protein belongs to the UPF0298 family.

It localises to the cytoplasm. This Latilactobacillus sakei subsp. sakei (strain 23K) (Lactobacillus sakei subsp. sakei) protein is UPF0298 protein LCA_1075.